A 464-amino-acid chain; its full sequence is tRNA modification GTPase MnmE (464 aa).

(6S)-5-formyl-5,6,7,8-tetrahydrofolate-binding residues include Arg-28, Glu-90, and Arg-129. The 160-residue stretch at 226-385 folds into the TrmE-type G domain; sequence GLATAIVGRP…LEEKIAELFF (160 aa). Residue Asn-236 participates in K(+) binding. GTP contacts are provided by residues 236 to 241, 255 to 261, and 280 to 283; these read NVGKSS, TDIAGTT, and DTAG. Ser-240 provides a ligand contact to Mg(2+). Positions 255, 257, and 260 each coordinate K(+). Thr-261 lines the Mg(2+) pocket. Lys-464 is a (6S)-5-formyl-5,6,7,8-tetrahydrofolate binding site.

The protein belongs to the TRAFAC class TrmE-Era-EngA-EngB-Septin-like GTPase superfamily. TrmE GTPase family. In terms of assembly, homodimer. Heterotetramer of two MnmE and two MnmG subunits. It depends on K(+) as a cofactor.

It localises to the cytoplasm. Its function is as follows. Exhibits a very high intrinsic GTPase hydrolysis rate. Involved in the addition of a carboxymethylaminomethyl (cmnm) group at the wobble position (U34) of certain tRNAs, forming tRNA-cmnm(5)s(2)U34. The polypeptide is tRNA modification GTPase MnmE (Ligilactobacillus salivarius (strain UCC118) (Lactobacillus salivarius)).